A 272-amino-acid chain; its full sequence is HMP-PP phosphatase (272 aa).

Asp8 acts as the Nucleophile in catalysis. Mg(2+) contacts are provided by Asp8, Asp10, and Asp212.

It belongs to the HAD-like hydrolase superfamily. Cof family. Requires Mg(2+) as cofactor.

It catalyses the reaction 4-amino-2-methyl-5-(diphosphooxymethyl)pyrimidine + H2O = 4-amino-2-methyl-5-(phosphooxymethyl)pyrimidine + phosphate + H(+). In terms of biological role, catalyzes the hydrolysis of 4-amino-2-methyl-5-hydroxymethylpyrimidine pyrophosphate (HMP-PP) to 4-amino-2-methyl-5-hydroxymethylpyrimidine phosphate (HMP-P). The sequence is that of HMP-PP phosphatase from Salmonella newport (strain SL254).